The primary structure comprises 56 residues: Large ribosomal subunit protein bL32 (56 aa).

Belongs to the bacterial ribosomal protein bL32 family.

In Brevibacillus brevis (strain 47 / JCM 6285 / NBRC 100599), this protein is Large ribosomal subunit protein bL32.